The primary structure comprises 69 residues: Beta-defensin 11 (69 aa).

The signal sequence occupies residues 1-23; that stretch reads MRTLCSLLLIGCLLFSYDTPVVG. Disulfide bonds link C35-C64, C42-C57, and C47-C65.

This sequence belongs to the beta-defensin family.

The protein localises to the secreted. Has antibacterial activity. In Rattus norvegicus (Rat), this protein is Beta-defensin 11 (Defb11).